The sequence spans 205 residues: MIIQKIEFNDKKDKFVIETDTKESFLLSYNDFEKFKIHNEMIIDDELYAHLLNISKFGEAFDISLNFLSYKLRTEKEIITKLKSKKFSTEIIDDVITKLKNLDLLDDYNYAKIFINDKINLTNYSKRRIINDLYQKGIDKKIYEDYLEEVFGYNMELDKATLIVETKINIWKEKYEGYELKNKIFTFLLQKGFSYDVAKQISGMY.

Belongs to the RecX family.

It localises to the cytoplasm. Functionally, modulates RecA activity. This is Regulatory protein RecX from Finegoldia magna (strain ATCC 29328 / DSM 20472 / WAL 2508) (Peptostreptococcus magnus).